A 492-amino-acid chain; its full sequence is 3-octaprenyl-4-hydroxybenzoate carboxy-lyase (492 aa).

Residue Asn-177 coordinates Mn(2+). Residues 180–182, 194–196, and 199–200 contribute to the prenylated FMN site; these read IYR, RWL, and RG. Glu-243 is a binding site for Mn(2+). Residue Asp-292 is the Proton donor of the active site.

This sequence belongs to the UbiD family. Homohexamer. Requires prenylated FMN as cofactor. Mn(2+) serves as cofactor.

Its subcellular location is the cell membrane. It catalyses the reaction a 4-hydroxy-3-(all-trans-polyprenyl)benzoate + H(+) = a 2-(all-trans-polyprenyl)phenol + CO2. It functions in the pathway cofactor biosynthesis; ubiquinone biosynthesis. Catalyzes the decarboxylation of 3-octaprenyl-4-hydroxy benzoate to 2-octaprenylphenol, an intermediate step in ubiquinone biosynthesis. This chain is 3-octaprenyl-4-hydroxybenzoate carboxy-lyase, found in Neisseria meningitidis serogroup A / serotype 4A (strain DSM 15465 / Z2491).